Here is a 283-residue protein sequence, read N- to C-terminus: MKDITTWIDEYQKGSRFGLKGKVLLKKNSKFQEILIIESDYYGKALMLDRCWMTSMRDEKYYHECLVHPALSSIKEKSRILIIGGGDGGTARECLKYSQVEKIDLVEIDEEVIKASKKFLQEIGGTAWIDKRLTIHIDDGVKWVEKAKNNFYDCIFIDCSDPSEFSNLLFTDTFYKECKRILTQKGILATQSESPESFKNIHIHILKSLKKVFKLSETMYSFVPIYPSGIWSWTFASKGELNLSTPCCNEVTTIEKGCDIWNLNFQNAAFKMMPNKIVKELNS.

The PABS domain occupies 5–238 (TTWIDEYQKG…GIWSWTFASK (234 aa)). An S-methyl-5'-thioadenosine-binding site is contributed by Q32. Residues H63 and D87 each coordinate spermidine. S-methyl-5'-thioadenosine-binding positions include E107 and 139–140 (DG). The active-site Proton acceptor is D158. 158-161 (DCSD) is a spermidine binding site.

It belongs to the spermidine/spermine synthase family. As to quaternary structure, homodimer or homotetramer.

The protein resides in the cytoplasm. The catalysed reaction is S-adenosyl 3-(methylsulfanyl)propylamine + putrescine = S-methyl-5'-thioadenosine + spermidine + H(+). Its pathway is amine and polyamine biosynthesis; spermidine biosynthesis; spermidine from putrescine: step 1/1. Catalyzes the irreversible transfer of a propylamine group from the amino donor S-adenosylmethioninamine (decarboxy-AdoMet) to putrescine (1,4-diaminobutane) to yield spermidine. This Prochlorococcus marinus (strain MIT 9515) protein is Polyamine aminopropyltransferase.